Consider the following 150-residue polypeptide: D-aminoacyl-tRNA deacylase (150 aa).

Positions 136-137 match the Gly-cisPro motif, important for rejection of L-amino acids motif; that stretch reads GP.

It belongs to the DTD family. Homodimer.

The protein resides in the cytoplasm. It catalyses the reaction glycyl-tRNA(Ala) + H2O = tRNA(Ala) + glycine + H(+). The enzyme catalyses a D-aminoacyl-tRNA + H2O = a tRNA + a D-alpha-amino acid + H(+). An aminoacyl-tRNA editing enzyme that deacylates mischarged D-aminoacyl-tRNAs. Also deacylates mischarged glycyl-tRNA(Ala), protecting cells against glycine mischarging by AlaRS. Acts via tRNA-based rather than protein-based catalysis; rejects L-amino acids rather than detecting D-amino acids in the active site. By recycling D-aminoacyl-tRNA to D-amino acids and free tRNA molecules, this enzyme counteracts the toxicity associated with the formation of D-aminoacyl-tRNA entities in vivo and helps enforce protein L-homochirality. This is D-aminoacyl-tRNA deacylase from Staphylococcus saprophyticus subsp. saprophyticus (strain ATCC 15305 / DSM 20229 / NCIMB 8711 / NCTC 7292 / S-41).